The chain runs to 116 residues: Large ribosomal subunit protein bL19 (116 aa).

This sequence belongs to the bacterial ribosomal protein bL19 family.

Functionally, this protein is located at the 30S-50S ribosomal subunit interface and may play a role in the structure and function of the aminoacyl-tRNA binding site. The polypeptide is Large ribosomal subunit protein bL19 (Magnetococcus marinus (strain ATCC BAA-1437 / JCM 17883 / MC-1)).